The following is an 83-amino-acid chain: Cytochrome b559 subunit alpha (83 aa).

Residues 21-35 form a helical membrane-spanning segment; it reads VIHSITIPSLFIAGW. Position 23 (histidine 23) interacts with heme.

This sequence belongs to the PsbE/PsbF family. Heterodimer of an alpha subunit and a beta subunit. PSII is composed of 1 copy each of membrane proteins PsbA, PsbB, PsbC, PsbD, PsbE, PsbF, PsbH, PsbI, PsbJ, PsbK, PsbL, PsbM, PsbT, PsbX, PsbY, PsbZ, Psb30/Ycf12, at least 3 peripheral proteins of the oxygen-evolving complex and a large number of cofactors. It forms dimeric complexes. Heme b serves as cofactor.

The protein resides in the plastid. It localises to the chloroplast thylakoid membrane. Its function is as follows. This b-type cytochrome is tightly associated with the reaction center of photosystem II (PSII). PSII is a light-driven water:plastoquinone oxidoreductase that uses light energy to abstract electrons from H(2)O, generating O(2) and a proton gradient subsequently used for ATP formation. It consists of a core antenna complex that captures photons, and an electron transfer chain that converts photonic excitation into a charge separation. This is Cytochrome b559 subunit alpha from Citrus sinensis (Sweet orange).